A 273-amino-acid polypeptide reads, in one-letter code: Putative pyruvate, phosphate dikinase regulatory protein (273 aa).

153-160 (GVSRTSKT) is an ADP binding site.

It belongs to the pyruvate, phosphate/water dikinase regulatory protein family. PDRP subfamily.

The catalysed reaction is N(tele)-phospho-L-histidyl/L-threonyl-[pyruvate, phosphate dikinase] + ADP = N(tele)-phospho-L-histidyl/O-phospho-L-threonyl-[pyruvate, phosphate dikinase] + AMP + H(+). The enzyme catalyses N(tele)-phospho-L-histidyl/O-phospho-L-threonyl-[pyruvate, phosphate dikinase] + phosphate + H(+) = N(tele)-phospho-L-histidyl/L-threonyl-[pyruvate, phosphate dikinase] + diphosphate. Functionally, bifunctional serine/threonine kinase and phosphorylase involved in the regulation of the pyruvate, phosphate dikinase (PPDK) by catalyzing its phosphorylation/dephosphorylation. The sequence is that of Putative pyruvate, phosphate dikinase regulatory protein from Rhizobium meliloti (strain 1021) (Ensifer meliloti).